We begin with the raw amino-acid sequence, 89 residues long: Small ribosomal subunit protein uS15 (89 aa).

This sequence belongs to the universal ribosomal protein uS15 family. In terms of assembly, part of the 30S ribosomal subunit. Forms a bridge to the 50S subunit in the 70S ribosome, contacting the 23S rRNA.

One of the primary rRNA binding proteins, it binds directly to 16S rRNA where it helps nucleate assembly of the platform of the 30S subunit by binding and bridging several RNA helices of the 16S rRNA. Functionally, forms an intersubunit bridge (bridge B4) with the 23S rRNA of the 50S subunit in the ribosome. The sequence is that of Small ribosomal subunit protein uS15 from Dechloromonas aromatica (strain RCB).